A 326-amino-acid polypeptide reads, in one-letter code: MLTLARQQQRQNIRWLLCLSVLMLLALLLSLCAGELWILPGDWFSPRGELFVWQIRLPRTLAVLLVGAALAISGAVMQALFENPLAEPGLLGVSNGAGVGLIAAVLLGQGQLPNWALGLCAIAGALIITLILLRFARRHLSTSRLLLAGVALGIICSALMTWAIYFSTSVDLRQLMYWMMGGFGGVDWRQSWLMLALIPVLLWICCQSRPMNMLALGEISARQLGLPLWFWRNVLVAATGWMVGVSVALAGAIGFIGLVIPHILRLCGLTDHRVLLPGCALAGASALLLADIVARLALAAAELPIGVVTATLGAPVFIWLLLKAGR.

A run of 9 helical transmembrane segments spans residues 19–39 (LSVL…LWIL), 61–81 (LAVL…QALF), 88–108 (PGLL…VLLG), 112–132 (LPNW…TLIL), 146–166 (LLAG…AIYF), 184–204 (GGVD…LLWI), 240–260 (GWMV…GLVI), 274–294 (VLLP…DIVA), and 302–322 (ELPI…WLLL).

Belongs to the binding-protein-dependent transport system permease family. FecCD subfamily. In terms of assembly, the complex is composed of two ATP-binding proteins (BtuD), two transmembrane proteins (BtuC) and a solute-binding protein (BtuF).

The protein resides in the cell inner membrane. Functionally, part of the ABC transporter complex BtuCDF involved in vitamin B12 import. Involved in the translocation of the substrate across the membrane. The protein is Vitamin B12 import system permease protein BtuC of Escherichia coli O6:K15:H31 (strain 536 / UPEC).